Consider the following 264-residue polypeptide: Proliferating cell nuclear antigen 2 (264 aa).

Residues 61-80 (RCDRNLSMGMNLGNMSKMLK) mediate DNA binding.

This sequence belongs to the PCNA family. In terms of assembly, homo- and heterotrimer. Interacts with POLH, ATXR5 and ATXR6.

Its subcellular location is the nucleus. Its function is as follows. This protein is an auxiliary protein of DNA polymerase delta and is involved in the control of eukaryotic DNA replication by increasing the polymerase's processibility during elongation of the leading strand. May be involved in UV resistance. This chain is Proliferating cell nuclear antigen 2 (PCNA2), found in Arabidopsis thaliana (Mouse-ear cress).